We begin with the raw amino-acid sequence, 254 residues long: tRNA (guanine-N(1)-)-methyltransferase (254 aa).

S-adenosyl-L-methionine is bound by residues Gly-112 and 131–136 (IGDFIL).

This sequence belongs to the RNA methyltransferase TrmD family. Homodimer.

It is found in the cytoplasm. The enzyme catalyses guanosine(37) in tRNA + S-adenosyl-L-methionine = N(1)-methylguanosine(37) in tRNA + S-adenosyl-L-homocysteine + H(+). Its function is as follows. Specifically methylates guanosine-37 in various tRNAs. The sequence is that of tRNA (guanine-N(1)-)-methyltransferase from Persephonella marina (strain DSM 14350 / EX-H1).